Reading from the N-terminus, the 98-residue chain is UPF0235 protein Asuc_1977 (98 aa).

The protein belongs to the UPF0235 family.

The polypeptide is UPF0235 protein Asuc_1977 (Actinobacillus succinogenes (strain ATCC 55618 / DSM 22257 / CCUG 43843 / 130Z)).